Consider the following 115-residue polypeptide: Ribosomal protein uS4-like (115 aa).

This sequence belongs to the universal ribosomal protein uS4 family.

The chain is Ribosomal protein uS4-like from Azoarcus sp. (strain BH72).